The sequence spans 93 residues: Cell division protein FtsB (93 aa).

Over 1–3 (MRI) the chain is Cytoplasmic. A helical membrane pass occupies residues 4–21 (FVIALTLLFGWLQYTLWF). The Periplasmic portion of the chain corresponds to 22–93 (GKNGVSDYYT…FYRIVDEEEH (72 aa)). Positions 31-75 (TVEDEIEVQQQVNSKLQARNNEMFAEIDDLRQGLDAIEERARHEL) form a coiled coil.

Belongs to the FtsB family. As to quaternary structure, part of a complex composed of FtsB, FtsL and FtsQ.

It localises to the cell inner membrane. Functionally, essential cell division protein. May link together the upstream cell division proteins, which are predominantly cytoplasmic, with the downstream cell division proteins, which are predominantly periplasmic. This chain is Cell division protein FtsB, found in Vibrio campbellii (strain ATCC BAA-1116).